A 437-amino-acid polypeptide reads, in one-letter code: Glucose-1-phosphate adenylyltransferase (437 aa).

Alpha-D-glucose 1-phosphate is bound by residues Tyr-113, Gly-179, 194–195 (EK), and Ser-212.

It belongs to the bacterial/plant glucose-1-phosphate adenylyltransferase family. As to quaternary structure, homotetramer.

It catalyses the reaction alpha-D-glucose 1-phosphate + ATP + H(+) = ADP-alpha-D-glucose + diphosphate. Its pathway is glycan biosynthesis; glycogen biosynthesis. Involved in the biosynthesis of ADP-glucose, a building block required for the elongation reactions to produce glycogen. Catalyzes the reaction between ATP and alpha-D-glucose 1-phosphate (G1P) to produce pyrophosphate and ADP-Glc. This is Glucose-1-phosphate adenylyltransferase from Haemophilus influenzae (strain 86-028NP).